A 176-amino-acid polypeptide reads, in one-letter code: ATP-dependent protease subunit HslV (176 aa).

Threonine 2 is a catalytic residue. Na(+) is bound by residues glycine 157, cysteine 160, and threonine 163.

The protein belongs to the peptidase T1B family. HslV subfamily. In terms of assembly, a double ring-shaped homohexamer of HslV is capped on each side by a ring-shaped HslU homohexamer. The assembly of the HslU/HslV complex is dependent on binding of ATP.

The protein resides in the cytoplasm. The enzyme catalyses ATP-dependent cleavage of peptide bonds with broad specificity.. Its activity is regulated as follows. Allosterically activated by HslU binding. Protease subunit of a proteasome-like degradation complex believed to be a general protein degrading machinery. This is ATP-dependent protease subunit HslV from Pseudomonas fluorescens (strain SBW25).